The following is a 277-amino-acid chain: Putative acetylornithine deacetylase (277 aa).

It catalyses the reaction N(2)-acetyl-L-ornithine + H2O = L-ornithine + acetate. Its pathway is amino-acid biosynthesis; L-arginine biosynthesis; L-ornithine from N(2)-acetyl-L-ornithine (linear): step 1/1. In Leptospira biflexa, this protein is Putative acetylornithine deacetylase (argE).